The sequence spans 603 residues: Zyxin (603 aa).

The span at Met1–Leu13 shows a compositional bias: pro residues. Disordered regions lie at residues Met1 to Pro131, Thr166 to Ser193, Ala218 to Gly237, Arg310 to Ser333, and Leu363 to Thr395. Positions Val69–Tyr95 are enriched in basic and acidic residues. Residues Glu184–Ser193 are compositionally biased toward polar residues. The segment covering Ala218–Asn234 has biased composition (low complexity). Polar residues-rich tracts occupy residues Thr315 to Ser333, Leu363 to Ile373, and Pro382 to Ala391. LIM zinc-binding domains lie at Asn409–Lys470, Cys471–Pro529, and Arg530–Ser601.

Belongs to the zyxin/ajuba family. Interacts with dyc-1. Interacts with glh-1 and glh-3. As to expression, expressed in neurons and body wall muscle. Expressed in pharyngeal, enteric and uterine muscles and in spermatheca.

It localises to the nucleus. The protein localises to the cytoplasm. The protein resides in the myofibril. Its subcellular location is the sarcomere. It is found in the m line. It localises to the cell projection. The protein localises to the axon. The protein resides in the cell junction. Its subcellular location is the focal adhesion. It is found in the cytoskeleton. Its function is as follows. Functions both as a mechanical stabilizer (via LIM domains) of focal adhesions, and as a sensor component for muscle cell damage (via N-terminus). Regulates, stabilizes and maintains posterior lateral mechanosensory (PLM) synaptic branch extension and new synapse formation and growth during larval development. This Caenorhabditis elegans protein is Zyxin.